A 170-amino-acid chain; its full sequence is Protein-lysine myristoyltransferase HlyC (170 aa).

Residues H23 and D92 contribute to the active site. Position 151 (H151) interacts with heme.

The protein belongs to the RTX toxin acyltransferase family. Monomer. In terms of processing, proteolytically cleaved by the protease systems ClpAP, ClpXP and FtsH, leading to its degradation.

It is found in the cytoplasm. It carries out the reaction tetradecanoyl-[ACP] + L-lysyl-[protein] = N(6)-tetradecanoyl-L-lysyl-[protein] + holo-[ACP] + H(+). Its activity is regulated as follows. The acyltransferase activity is inhibited by heme. Protein-lysine myristoyltransferase that catalyzes myristoylation of the protoxin (HlyA) at two internal lysine residues, thereby converting it to the active toxin. The polypeptide is Protein-lysine myristoyltransferase HlyC (Escherichia coli).